The chain runs to 845 residues: Protein P (845 aa).

The interval 1–179 (MPLSYQHFRK…FCGSPYSWEQ (179 aa)) is terminal protein domain (TP). The segment at 180-348 (ELQHGRLVIK…YCLSHLVNLR (169 aa)) is spacer. Residues 226 to 246 (GLQPHQGPLASSQPGRSGSIR) form a disordered region. The interval 349-692 (EDRGPCDEHG…YMNLYPVARQ (344 aa)) is polymerase/reverse transcriptase domain (RT). The Reverse transcriptase domain occupies 359–602 (EHHIRIPRTP…YSLNFMGYVI (244 aa)). Asp-431, Asp-553, and Asp-554 together coordinate Mg(2+).

This sequence belongs to the hepadnaviridae P protein family.

The enzyme catalyses DNA(n) + a 2'-deoxyribonucleoside 5'-triphosphate = DNA(n+1) + diphosphate. It catalyses the reaction Endonucleolytic cleavage to 5'-phosphomonoester.. Activated by host HSP70 and HSP40 in vitro to be able to bind the epsilon loop of the pgRNA. Because deletion of the RNase H region renders the protein partly chaperone-independent, the chaperones may be needed indirectly to relieve occlusion of the RNA-binding site by this domain. Inhibited by several reverse-transcriptase inhibitors: Lamivudine, Adefovir and Entecavir. In terms of biological role, multifunctional enzyme that converts the viral RNA genome into dsDNA in viral cytoplasmic capsids. This enzyme displays a DNA polymerase activity that can copy either DNA or RNA templates, and a ribonuclease H (RNase H) activity that cleaves the RNA strand of RNA-DNA heteroduplexes in a partially processive 3'- to 5'-endonucleasic mode. Neo-synthesized pregenomic RNA (pgRNA) are encapsidated together with the P protein, and reverse-transcribed inside the nucleocapsid. Initiation of reverse-transcription occurs first by binding the epsilon loop on the pgRNA genome, and is initiated by protein priming, thereby the 5'-end of (-)DNA is covalently linked to P protein. Partial (+)DNA is synthesized from the (-)DNA template and generates the relaxed circular DNA (RC-DNA) genome. After budding and infection, the RC-DNA migrates in the nucleus, and is converted into a plasmid-like covalently closed circular DNA (cccDNA). The activity of P protein does not seem to be necessary for cccDNA generation, and is presumably released from (+)DNA by host nuclear DNA repair machinery. The chain is Protein P from Hepatitis B virus genotype A2 subtype adw2 (isolate Germany/991/1990) (HBV-A).